The primary structure comprises 333 residues: Cytochrome f (333 aa).

The first 37 residues, M1–A37, serve as a signal peptide directing secretion. At L38–R298 the chain is on the cytoplasmic side. Residues Y45, C66, C69, and H70 each coordinate heme. A helical transmembrane segment spans residues V299–K319. Residues K320 to F333 are Lumenal, thylakoid-facing.

The protein belongs to the cytochrome f family. The 4 large subunits of the cytochrome b6-f complex are cytochrome b6, subunit IV (17 kDa polypeptide, PetD), cytochrome f and the Rieske protein, while the 4 small subunits are PetG, PetL, PetM and PetN. The complex functions as a dimer. Heme is required as a cofactor.

The protein localises to the cellular thylakoid membrane. Its function is as follows. Component of the cytochrome b6-f complex, which mediates electron transfer between photosystem II (PSII) and photosystem I (PSI), cyclic electron flow around PSI, and state transitions. The protein is Cytochrome f (petA) of Mastigocladus laminosus (Fischerella sp.).